The primary structure comprises 461 residues: Ufm1-specific protease 2 (461 aa).

Catalysis depends on residues Cys-294, Asp-418, and His-420.

This sequence belongs to the peptidase C78 family.

It is found in the endoplasmic reticulum. Its subcellular location is the cytoplasm. The protein localises to the nucleus. In terms of biological role, thiol-dependent isopeptidase that specifically cleaves UFM1, a ubiquitin-like modifier protein, from conjugated proteins, such as CD274/PD-L1, CYB5R3, DDRGK1, MRE11, RPL26/uL24, TRIP4 and RPL26/uL24. While it is also able to mediate the processing of UFM1 precursors, a prerequisite for conjugation reactions, UFSP2 mainly acts as a protein deUFMylase that mediates deconjugation of UFM1 from target proteins. Mediates deUFMylation of RPL26/uL24, a critical step to release the UFM1 ribosome E3 ligase (UREL) complex during the recycling of 60S ribosome subunits from the endoplasmic reticulum. Catalyzes deUFMylation of TRIP4, regulating intracellular nuclear receptors transactivation and thereby regulate cell proliferation and differentiation. The polypeptide is Ufm1-specific protease 2 (Rattus norvegicus (Rat)).